The chain runs to 318 residues: Mitochondrial thiamine pyrophosphate carrier (318 aa).

3 Solcar repeats span residues 13–106 (NSKL…LTEL), 116–202 (HQFS…LKRA), and 214–309 (TGNL…FCNL). 6 helical membrane-spanning segments follow: residues 19–39 (AVAGSVSGFVTRALISPLDVI), 87–107 (ILSIGYGAVQFLAFEELTELL), 122–142 (FVCGGLSAGTATLTVHPVDVL), 173–193 (VFYKGLTPTVIAIFPYAGLQF), 220–240 (LLCGCGSGVISKTLTYPLDLF), and 293–313 (ALSTGFMFFWYELFCNLFHCI).

Belongs to the mitochondrial carrier (TC 2.A.29) family.

Its subcellular location is the mitochondrion membrane. It catalyses the reaction thiamine phosphate(out) + thiamine diphosphate(in) = thiamine phosphate(in) + thiamine diphosphate(out). Mitochondrial transporter mediating uptake of thiamine diphosphate into mitochondria. It is not clear if the antiporter activity is affected by the membrane potential or by the proton electrochemical gradient. In Rattus norvegicus (Rat), this protein is Mitochondrial thiamine pyrophosphate carrier (Slc25a19).